The primary structure comprises 141 residues: Hemoglobin subunit alpha (141 aa).

Residues 1 to 141 (VLSEADKSNV…VSTVLTSKYR (141 aa)) form the Globin domain. Residue H58 coordinates O2. Position 87 (H87) interacts with heme b.

This sequence belongs to the globin family. As to quaternary structure, heterotetramer of two alpha chains and two beta chains. When oxygenated in vitro, exists virtually only in polymeric form. When deoxygenated, forms tetramers, octamers and larger polymers. As to expression, red blood cells.

Involved in oxygen transport from the lung to the various peripheral tissues. The sequence is that of Hemoglobin subunit alpha from Paleosuchus palpebrosus (Cuvier's smooth-fronted caiman).